The chain runs to 102 residues: Probable non-specific lipid-transfer protein (102 aa).

A signal peptide spans 1 to 35 (MAMAMGMAMRKEAAVAVMMVMVVTLAAGADAGAGA). Cystine bridges form between cysteine 37/cysteine 71, cysteine 45/cysteine 59, cysteine 60/cysteine 95, and cysteine 69/cysteine 102.

The protein belongs to the plant LTP family. B11E subfamily. Aleurone.

Its function is as follows. Potential phospholipid transfer protein. This chain is Probable non-specific lipid-transfer protein (LTP2), found in Hordeum vulgare (Barley).